We begin with the raw amino-acid sequence, 64 residues long: Large ribosomal subunit protein bL35 (64 aa).

The disordered stretch occupies residues 1 to 56 (MPKMKSNKSVAARFKLTGSGQLKRTRPGKRHKLSKKSSQEKRNLSKQPLVDKGQVG). A compositionally biased stretch (basic residues) spans 23–35 (KRTRPGKRHKLSK).

Belongs to the bacterial ribosomal protein bL35 family.

The protein is Large ribosomal subunit protein bL35 of Chlamydia abortus (strain DSM 27085 / S26/3) (Chlamydophila abortus).